Reading from the N-terminus, the 118-residue chain is Basic phospholipase A2 PA-13 (118 aa).

7 disulfide bridges follow: C11–C71, C27–C117, C29–C45, C44–C98, C51–C91, C60–C84, and C78–C89. Positions 28, 30, and 32 each coordinate Ca(2+). The active site involves H48. D49 contributes to the Ca(2+) binding site. D92 is a catalytic residue.

The protein belongs to the phospholipase A2 family. Group I subfamily. D49 sub-subfamily. It depends on Ca(2+) as a cofactor. Expressed by the venom gland.

Its subcellular location is the secreted. The catalysed reaction is a 1,2-diacyl-sn-glycero-3-phosphocholine + H2O = a 1-acyl-sn-glycero-3-phosphocholine + a fatty acid + H(+). Its function is as follows. PLA2 catalyzes the calcium-dependent hydrolysis of the 2-acyl groups in 3-sn-phosphoglycerides. The polypeptide is Basic phospholipase A2 PA-13 (Pseudechis australis (Mulga snake)).